The chain runs to 251 residues: Ribosomal RNA small subunit methyltransferase J (251 aa).

S-adenosyl-L-methionine contacts are provided by residues 100-101 (RD), 116-117 (ER), and Asp-170.

The protein belongs to the methyltransferase superfamily. RsmJ family.

Its subcellular location is the cytoplasm. It carries out the reaction guanosine(1516) in 16S rRNA + S-adenosyl-L-methionine = N(2)-methylguanosine(1516) in 16S rRNA + S-adenosyl-L-homocysteine + H(+). Specifically methylates the guanosine in position 1516 of 16S rRNA. This Actinobacillus pleuropneumoniae serotype 3 (strain JL03) protein is Ribosomal RNA small subunit methyltransferase J.